The chain runs to 530 residues: Pentatricopeptide repeat-containing protein At5g56310 (530 aa).

PPR repeat units lie at residues 77–114, 115–149, 150–180, 181–211, 214–248, 249–283, 284–314, 315–349, 350–380, and 386–420; these read NTYL…CAKP, DTFT…GFDS, SVHV…MLVK, DVNV…MPCW, NEVS…NVEP, DEVT…GMNR, AVSL…VNER, NVVT…GVRP, NDVT…MRSK, and NIEH…ANAA. The interval 421–496 is type E motif; sequence IWGSLLAASN…MAGESSIEVE (76 aa). A type E(+) motif region spans residues 497–527; the sequence is NRVYKFISGDLTHPQVERIHEILQEMDLQIQ.

The protein belongs to the PPR family. PCMP-E subfamily.

This Arabidopsis thaliana (Mouse-ear cress) protein is Pentatricopeptide repeat-containing protein At5g56310 (PCMP-E13).